Here is a 464-residue protein sequence, read N- to C-terminus: Protein FAM90A16 (464 aa).

Disordered stretches follow at residues 1 to 42 (MMAR…DPRL), 70 to 389 (PATL…HDGA), and 415 to 437 (HSPE…SEAP). 2 stretches are compositionally biased toward basic and acidic residues: residues 74 to 89 (GKKE…KPRV) and 97 to 114 (NKDK…DPQR). Residues 180–197 (LASLSPLRKASLSSSSSL) are compositionally biased toward low complexity.

It belongs to the FAM90 family.

This is Protein FAM90A16 from Homo sapiens (Human).